The primary structure comprises 96 residues: Protein RnfH (96 aa).

The protein belongs to the UPF0125 (RnfH) family.

The chain is Protein RnfH from Pectobacterium carotovorum subsp. carotovorum (strain PC1).